A 695-amino-acid chain; its full sequence is Ubiquitin carboxyl-terminal hydrolase 20 (695 aa).

2 disordered regions span residues methionine 1–leucine 20 and serine 42–tyrosine 162. Composition is skewed to low complexity over residues proline 9–leucine 20 and asparagine 61–valine 86. The span at aspartate 112 to leucine 124 shows a compositional bias: acidic residues. The 301-residue stretch at alanine 176–glutamate 476 folds into the USP domain. The active-site Nucleophile is cysteine 185. Catalysis depends on histidine 435, which acts as the Proton acceptor. Residues serine 556–leucine 571 show a composition bias toward low complexity. Disordered stretches follow at residues serine 556 to glutamate 585 and alanine 674 to threonine 695.

This sequence belongs to the peptidase C19 family.

It carries out the reaction Thiol-dependent hydrolysis of ester, thioester, amide, peptide and isopeptide bonds formed by the C-terminal Gly of ubiquitin (a 76-residue protein attached to proteins as an intracellular targeting signal).. Functionally, recognizes and hydrolyzes the peptide bond at the C-terminal Gly of ubiquitin. Involved in the processing of poly-ubiquitin precursors as well as that of ubiquitinated proteins. The sequence is that of Ubiquitin carboxyl-terminal hydrolase 20 (UBP20) from Arabidopsis thaliana (Mouse-ear cress).